Consider the following 123-residue polypeptide: Small ribosomal subunit protein uS12 (123 aa).

Belongs to the universal ribosomal protein uS12 family. In terms of assembly, part of the 30S ribosomal subunit. Contacts proteins S8 and S17. May interact with IF1 in the 30S initiation complex.

In terms of biological role, with S4 and S5 plays an important role in translational accuracy. Its function is as follows. Interacts with and stabilizes bases of the 16S rRNA that are involved in tRNA selection in the A site and with the mRNA backbone. Located at the interface of the 30S and 50S subunits, it traverses the body of the 30S subunit contacting proteins on the other side and probably holding the rRNA structure together. The combined cluster of proteins S8, S12 and S17 appears to hold together the shoulder and platform of the 30S subunit. This chain is Small ribosomal subunit protein uS12, found in Corynebacterium diphtheriae (strain ATCC 700971 / NCTC 13129 / Biotype gravis).